Here is a 337-residue protein sequence, read N- to C-terminus: Casein kinase I isoform alpha (337 aa).

A2 carries the post-translational modification N-acetylalanine. Residue S4 is modified to Phosphoserine. The residue at position 8 (K8) is an N6-acetyllysine. The region spanning 17-285 (YKLVRKIGSG…YLRQLFRILF (269 aa)) is the Protein kinase domain. ATP is bound by residues 23–31 (IGSGSFGDI) and K46. D136 (proton acceptor) is an active-site residue. Residues 309–325 (AASSSGQGQQAQTPTGK) show a composition bias toward low complexity. The disordered stretch occupies residues 309–337 (AASSSGQGQQAQTPTGKQTDKTKSNMKGF).

The protein belongs to the protein kinase superfamily. CK1 Ser/Thr protein kinase family. Casein kinase I subfamily. As to quaternary structure, interacts with the Axin complex. Interacts with TUT1, leading to TUT1 phosphorylation. Interacts with FAM83A, FAM83B, FAM83C, FAM83D, FAM83E, FAM83F, FAM83G and FAM83H (via DUF1669). Interaction with FAM83H recruits CSNK1A1 to keratin filaments. Post-translationally, phosphorylated by MTOR in response to mitogenic stimulation, leading to its activation.

It is found in the cytoplasm. It localises to the cytoskeleton. The protein localises to the microtubule organizing center. The protein resides in the centrosome. Its subcellular location is the chromosome. It is found in the centromere. It localises to the kinetochore. The protein localises to the nucleus speckle. The protein resides in the cilium basal body. Its subcellular location is the spindle. It carries out the reaction L-seryl-[protein] + ATP = O-phospho-L-seryl-[protein] + ADP + H(+). The enzyme catalyses L-threonyl-[protein] + ATP = O-phospho-L-threonyl-[protein] + ADP + H(+). Casein kinases are operationally defined by their preferential utilization of acidic proteins such as caseins as substrates. Can phosphorylate a large number of proteins. Participates in Wnt signaling. Phosphorylates CTNNB1 at 'Ser-45'. May phosphorylate PER1 and PER2. May play a role in segregating chromosomes during mitosis. May play a role in keratin cytoskeleton disassembly and thereby, it may regulate epithelial cell migration. Acts as a positive regulator of mTORC1 and mTORC2 signaling in response to nutrients by mediating phosphorylation of DEPTOR inhibitor. Acts as an inhibitor of NLRP3 inflammasome assembly by mediating phosphorylation of NLRP3. This Mus musculus (Mouse) protein is Casein kinase I isoform alpha (Csnk1a1).